The sequence spans 267 residues: Hydroxynaphthalene reductase-like protein Arp2 (267 aa).

NADP(+) contacts are provided by I25, N45, D71, and N98. Residues S147 and S148 each act as proton donor in the active site. The NADP(+) site is built by Y162, K166, V195, and T197. Y162 functions as the Proton acceptor in the catalytic mechanism. Residue K166 is the Lowers pKa of active site Tyr of the active site.

This sequence belongs to the short-chain dehydrogenases/reductases (SDR) family.

In terms of biological role, hydroxynaphthalene reductase-like protein; part of the Pks2 gene cluster that mediates the formation of infectious structures (appressoria), enabling these fungi to kill insects faster. The product of the Pks2 gene cluster is different from the one of Pks1 and has still not been identified. This Metarhizium acridum (strain CQMa 102) protein is Hydroxynaphthalene reductase-like protein Arp2.